We begin with the raw amino-acid sequence, 414 residues long: MSAPRRAVVTGLGVVAPHGIGAETFWKTAVDGTSSLARIDREGCGHLPLKIAGQVPDFDPAALIEDTYLVQTDRFTHFAMAATQLALDDARLSRADIDSPYSVGVVTAAGSGGGEFGQRELQKLWGQGSKYVGPYQSIAWFYAASTGQISIRGGFKGPCGVVAADEAGGLDALAHAALAVRRGTATVVAGATEAPLAPYSMVCQLGYPELSRSADPGRAYRPFTSAACGFVPAEGGAMFVLEEEGAARERGADARATVAGHAATFTGASRWEESRAGLAHAIGTALARAGCRPQDVDVVFADALGVPEADRAEALALADALGPHARRVPVTAPKAGIGRAFCAAAVLDVATALLAMEHELIPPTPHVLDVCHDLDLVVGRARPARPRTALVLSRGLMGNNSALVLRRGAAPFPE.

A Ketosynthase family 3 (KS3) domain is found at 4-407 (PRRAVVTGLG…GNNSALVLRR (404 aa)).

It belongs to the thiolase-like superfamily. Beta-ketoacyl-ACP synthases family.

Functionally, involved in developmentally regulated synthesis of a compound biosynthetically related to polyketide antibiotics which is essential for spore color in Streptomyces halstedii. This chain is Putative polyketide beta-ketoacyl synthase 2 (sch2), found in Streptomyces halstedii.